Reading from the N-terminus, the 396-residue chain is 1-deoxy-D-xylulose 5-phosphate reductoisomerase (396 aa).

NADPH-binding residues include Thr-15, Gly-16, Ser-17, Ile-18, Gly-41, and Asn-129. Lys-130 provides a ligand contact to 1-deoxy-D-xylulose 5-phosphate. Glu-131 is a binding site for NADPH. Asp-155 is a Mn(2+) binding site. 1-deoxy-D-xylulose 5-phosphate contacts are provided by Ser-156, Glu-157, Ser-182, and His-205. Glu-157 serves as a coordination point for Mn(2+). Gly-211 is an NADPH binding site. Residues Ser-218, Asn-223, Lys-224, and Glu-227 each coordinate 1-deoxy-D-xylulose 5-phosphate. Glu-227 is a binding site for Mn(2+).

The protein belongs to the DXR family. It depends on Mg(2+) as a cofactor. The cofactor is Mn(2+).

It carries out the reaction 2-C-methyl-D-erythritol 4-phosphate + NADP(+) = 1-deoxy-D-xylulose 5-phosphate + NADPH + H(+). The protein operates within isoprenoid biosynthesis; isopentenyl diphosphate biosynthesis via DXP pathway; isopentenyl diphosphate from 1-deoxy-D-xylulose 5-phosphate: step 1/6. Functionally, catalyzes the NADPH-dependent rearrangement and reduction of 1-deoxy-D-xylulose-5-phosphate (DXP) to 2-C-methyl-D-erythritol 4-phosphate (MEP). The polypeptide is 1-deoxy-D-xylulose 5-phosphate reductoisomerase (Xanthomonas campestris pv. campestris (strain 8004)).